Reading from the N-terminus, the 186-residue chain is Ribulose bisphosphate carboxylase small subunit, chloroplastic 6 (186 aa).

The transit peptide at 1-60 directs the protein to the chloroplast; the sequence is MASSMLSNAAVATTAASRSAGAQASMVAPFTGLKSVSAFPVTRKSSNDLSTVPSNGGKVQ.

Belongs to the RuBisCO small chain family. Heterohexadecamer of 8 large and 8 small subunits.

Its subcellular location is the plastid. It localises to the chloroplast. In terms of biological role, ruBisCO catalyzes two reactions: the carboxylation of D-ribulose 1,5-bisphosphate, the primary event in carbon dioxide fixation, as well as the oxidative fragmentation of the pentose substrate. Both reactions occur simultaneously and in competition at the same active site. Although the small subunit is not catalytic it is essential for maximal activity. The polypeptide is Ribulose bisphosphate carboxylase small subunit, chloroplastic 6 (Mesembryanthemum crystallinum (Common ice plant)).